The chain runs to 131 residues: Holo-[acyl-carrier-protein] synthase (131 aa).

The Mg(2+) site is built by aspartate 8 and glutamate 59.

It belongs to the P-Pant transferase superfamily. AcpS family. Requires Mg(2+) as cofactor.

The protein resides in the cytoplasm. It carries out the reaction apo-[ACP] + CoA = holo-[ACP] + adenosine 3',5'-bisphosphate + H(+). In terms of biological role, transfers the 4'-phosphopantetheine moiety from coenzyme A to a Ser of acyl-carrier-protein. This Paramagnetospirillum magneticum (strain ATCC 700264 / AMB-1) (Magnetospirillum magneticum) protein is Holo-[acyl-carrier-protein] synthase.